Here is a 424-residue protein sequence, read N- to C-terminus: Serine--tRNA ligase (424 aa).

231 to 233 (TAE) provides a ligand contact to L-serine. 262–264 (RAE) contributes to the ATP binding site. Residue E285 coordinates L-serine. 349 to 352 (EISS) is a binding site for ATP. Residue S385 coordinates L-serine.

Belongs to the class-II aminoacyl-tRNA synthetase family. Type-1 seryl-tRNA synthetase subfamily. As to quaternary structure, homodimer. The tRNA molecule binds across the dimer.

Its subcellular location is the cytoplasm. The enzyme catalyses tRNA(Ser) + L-serine + ATP = L-seryl-tRNA(Ser) + AMP + diphosphate + H(+). It carries out the reaction tRNA(Sec) + L-serine + ATP = L-seryl-tRNA(Sec) + AMP + diphosphate + H(+). It participates in aminoacyl-tRNA biosynthesis; selenocysteinyl-tRNA(Sec) biosynthesis; L-seryl-tRNA(Sec) from L-serine and tRNA(Sec): step 1/1. Functionally, catalyzes the attachment of serine to tRNA(Ser). Is also able to aminoacylate tRNA(Sec) with serine, to form the misacylated tRNA L-seryl-tRNA(Sec), which will be further converted into selenocysteinyl-tRNA(Sec). The polypeptide is Serine--tRNA ligase (Geobacillus kaustophilus (strain HTA426)).